A 613-amino-acid polypeptide reads, in one-letter code: Ribosome-associated molecular chaperone SSB1 (613 aa).

A nucleotide binding domain (NBD) region spans residues 1-391; that stretch reads MAEGVFQGAI…ILTGQSTSED (391 aa). Residues 16–18, Lys-73, 205–207, 271–278, and Gly-342 contribute to the ATP site; these read TTY, GGT, and ERAKRTLS. The segment at 392-402 is inter-domain linker; sequence TKDLLLLDVAP. The substrate binding domain (SBD) stretch occupies residues 403 to 613; sequence LSLGVGMQGD…RVVTKAMSSR (211 aa). Positions 516–612 are lid domain (SBDalpha); the sequence is SDEIEKMVNQ…KRVVTKAMSS (97 aa). The Nuclear export signal signature appears at 574–582; the sequence is IESALSDAL.

The protein belongs to the heat shock protein 70 family. Ssb-type Hsp70 subfamily. In terms of assembly, binds to ribosomes. Binds close to the ribosomal tunnel exit via contacts with both ribosomal proteins and rRNA. Directly interacts with nascent polypeptides. This interaction is dependent on the ribosome-associated complex (RAC). Interacts with SSE1. Interacts with FES1.

The protein resides in the cytoplasm. It carries out the reaction ATP + H2O = ADP + phosphate + H(+). In terms of biological role, ribosome-bound, Hsp70-type chaperone that assists in the cotranslational folding of newly synthesized proteins in the cytosol. Stimulates folding by interacting with nascent chains, binding to short, largely hydrophobic sequences exposed by unfolded proteins, thereby stabilizing longer, more slowly translated, and aggregation-prone nascent polypeptides and domains that cannot fold stably until fully synthesized. The Hsp70-protein substrate interaction depends on ATP-binding and on allosteric regulation between the NBD and the SBD. The ATP-bound state is characterized by a fast exchange rate of substrate (low affinity state), while in the ADP-bound state exchange is much slower (high affinity state). During the Hsp70 cycle, the chaperone switches between the ATP-bound state (open conformation) and the ADP-bound state (closed conformation) by major conformational rearrangements involving mainly the lid domain. Ssb cooperates with a specific Hsp40/Hsp70 co-chaperone termed the ribosome-associated complex (RAC), which stimulates the ATPase activity of the ribosome-associated pool of Ssbs and switches it to the high affinity substrate binding state. Hsp110 chaperone SSE1 and FES1 act as nucleotide exchange factors that cause substrate release. This chain is Ribosome-associated molecular chaperone SSB1 (SSB1), found in Zygosaccharomyces rouxii (strain ATCC 2623 / CBS 732 / NBRC 1130 / NCYC 568 / NRRL Y-229).